We begin with the raw amino-acid sequence, 164 residues long: Transcription antitermination protein NusB (164 aa).

The protein belongs to the NusB family.

In terms of biological role, involved in transcription antitermination. Required for transcription of ribosomal RNA (rRNA) genes. Binds specifically to the boxA antiterminator sequence of the ribosomal RNA (rrn) operons. This Chlorobium limicola (strain DSM 245 / NBRC 103803 / 6330) protein is Transcription antitermination protein NusB.